The sequence spans 233 residues: B-cell lymphoma/leukemia 10 (233 aa).

An N-acetylmethionine modification is found at methionine 1. The CARD domain maps to 13 to 101; it reads LTEVKKDALE…QNFLIQKITD (89 aa). Glycyl lysine isopeptide (Lys-Gly) (interchain with G-Cter in ubiquitin) cross-links involve residues lysine 17, lysine 31, and lysine 63. A compositionally biased stretch (polar residues) spans 130 to 141; the sequence is TNNLSRSNSDES. 2 disordered regions span residues 130–149 and 186–233; these read TNNL…KQRP and SFSS…LSRQ. Serine 138 carries the phosphoserine modification. A compositionally biased stretch (pro residues) spans 195–205; the sequence is PGDPGAPPLPP.

Homomultimer; homooligomerized following recruitment by CARD domain-containing proteins that form a nucleating helical template that recruits BCL10 via CARD-CARD interaction. Self-associates by CARD-CARD interaction and interacts with other CARD-proteins such as CARD9, CARD10, CARD11 and CARD14. Forms a complex with CARD14 and MALT1; resulting in the formation of a CBM (CARD14-BCL10-MALT1) complex. Forms a complex with CARD11 and MALT1; resulting in the formation of a CBM (CARD11-BCL10-MALT1) complex. Forms a complex with CARD9 and MALT1; resulting in the formation of a CBM (CARD9-BCL10-MALT1) complex. Found in a membrane raft complex, at least composed of BCL10, CARD11, DPP4 and IKBKB. Binds caspase-9 with its C-terminal domain. Interacts with TRAF2 and BIRC2/c-IAP2. Interacts with PELI2 and SOCS3; these interactions may be mutually exclusive. In terms of processing, phosphorylated. Phosphorylation results in dissociation from TRAF2 and binding to BIRC2/c-IAP2. Phosphorylated by IKBKB/IKKB. Post-translationally, ubiquitinated via both 'Lys-63'-linked and linear ('Met-1'-linked) polyubiquitin chains in response to T-cell receptor (TCR) activation. Ubiquitination is recognized by IKBKG/NEMO, the regulatory subunit of I-kappa-B kinase (IKK), and is required for TCR-induced NF-kappa-B activation. Linear ubiquitination at Lys-17, Lys-31 and Lys-63 is mediated by RNF31/HOIP; linear ubiquitination is recognized with much higher affinity than 'Lys-63'-linked ubiquitin by IKBKG/NEMO. CARD11 is required for linear ubiquitination by HOIP by promoting the targeting of BCL10 to RNF31/HOIP. Proteolytically cleaved by MALT1; required for T-cell activation.

It is found in the cytoplasm. It localises to the perinuclear region. The protein localises to the membrane raft. In terms of biological role, plays a key role in both adaptive and innate immune signaling by bridging CARD domain-containing proteins to immune activation. Acts by channeling adaptive and innate immune signaling downstream of CARD domain-containing proteins CARD9, CARD11 and CARD14 to activate NF-kappa-B and MAP kinase p38 (MAPK11, MAPK12, MAPK13 and/or MAPK14) pathways which stimulate expression of genes encoding pro-inflammatory cytokines and chemokines. Recruited by activated CARD domain-containing proteins: homooligomerized CARD domain-containing proteins form a nucleating helical template that recruits BCL10 via CARD-CARD interaction, thereby promoting polymerization of BCL10, subsequent recruitment of MALT1 and formation of a CBM complex. This leads to activation of NF-kappa-B and MAP kinase p38 (MAPK11, MAPK12, MAPK13 and/or MAPK14) pathways which stimulate expression of genes encoding pro-inflammatory cytokines and chemokines. Activated by CARD9 downstream of C-type lectin receptors; CARD9-mediated signals are essential for antifungal immunity. Activated by CARD11 downstream of T-cell receptor (TCR) and B-cell receptor (BCR). Promotes apoptosis, pro-caspase-9 maturation and activation of NF-kappa-B via NIK and IKK. This chain is B-cell lymphoma/leukemia 10, found in Rattus norvegicus (Rat).